Here is a 179-residue protein sequence, read N- to C-terminus: Large ribosomal subunit protein uL5 (179 aa).

This sequence belongs to the universal ribosomal protein uL5 family. Part of the 50S ribosomal subunit; part of the 5S rRNA/L5/L18/L25 subcomplex. Contacts the 5S rRNA and the P site tRNA. Forms a bridge to the 30S subunit in the 70S ribosome.

Functionally, this is one of the proteins that bind and probably mediate the attachment of the 5S RNA into the large ribosomal subunit, where it forms part of the central protuberance. In the 70S ribosome it contacts protein S13 of the 30S subunit (bridge B1b), connecting the 2 subunits; this bridge is implicated in subunit movement. Contacts the P site tRNA; the 5S rRNA and some of its associated proteins might help stabilize positioning of ribosome-bound tRNAs. This Yersinia enterocolitica serotype O:8 / biotype 1B (strain NCTC 13174 / 8081) protein is Large ribosomal subunit protein uL5.